Here is an 814-residue protein sequence, read N- to C-terminus: MASFPESDFQLCPLCKEMCVSTSSSSAGSAGGGTGLASAPPRRLHVLPCLHAFCRQCLEGRRSPGDSLQLRCPVCDHKVLISEAGMDALPSSTFLHLSNLLDAVVGAADEQQQSNGGRTASNRQRSASCSSSGLLRRAPPSQSEPRCSSCDDGNGASSHCLDCQENLCDNCLRAHQRVRLTKDHFIERFPASPCSSAASSAATTSSSSSSAFSLLPVYPERLYCQQHDEEVLHFYCDSCSVPICRECTMGRHAGHSFVYLQEALQDSRALTIQLLADAQQGRQAIQLSLEQAQALAEQVEMKAKVVQSEIKAVTSRHKKALEERECELLWKVEKIRQVKAKSLYHQVEKLHQALNKLDSTINAVQQVLEEGCTMDILIARDRVLAQVQDVKNARGLLQLQEDDRIMFTPPDQALYLAIKSLGLVSSGAFAALTKATGEGLKRALQGKVASFTVIGYDHDGEARLSGGDLITVLVMGPDGNLFAAEVSDQLNGTYLVSYRPQLEGEHLISVMVCNQHIENSPFKVNVKSGRCYLGIGLPTLSFGGEGDHDGKLCRPWGVCVDREGYIIVADRSNNRVQIFKPCGTFHHKFGSLGSRPGQFDRPAGVACDNSRRIVVADKDNHRVQIFTFEGQFLLKFGEKGTKNGQFNYPWDVAVNSEGKILVSDTRNHRVQLFGPDGTFLNKYGFEGALWKHFDSPRGVAFSQDGYLVVTDFNNHRLLIIKPDCQSAHFLGTEGTGNGQFLRPQGVAVDQEGRIIVADSRNHRVQIFEPNGSFLCKFGTQGSGFGQMDRPSGIAVTPDGTIVVVDFGNNRILAF.

The RING-type zinc finger occupies 12–76 (CPLCKEMCVS…SLQLRCPVCD (65 aa)). Positions 111–146 (QQQSNGGRTASNRQRSASCSSSGLLRRAPPSQSEPR) are disordered. Residues 120-138 (ASNRQRSASCSSSGLLRRA) show a composition bias toward low complexity. The B box-type 1; atypical zinc-finger motif lies at 142–189 (QSEPRCSSCDDGNGASSHCLDCQENLCDNCLRAHQRVRLTKDHFIERF). Residues Cys147, Cys150, Cys171, His175, Cys224, His227, Cys247, and His252 each contribute to the Zn(2+) site. A B box-type 2 zinc finger spans residues 219-260 (PERLYCQQHDEEVLHFYCDSCSVPICRECTMGRHAGHSFVYL). Positions 282–370 (RQAIQLSLEQ…INAVQQVLEE (89 aa)) form a coiled coil. Residues 425-526 (SSGAFAALTK…IENSPFKVNV (102 aa)) form a Filamin repeat. NHL repeat units lie at residues 539-582 (TLSF…FKPC), 586-629 (HHKF…FTFE), 633-676 (LLKF…FGPD), 680-723 (LNKY…IKPD), 727-770 (AHFL…FEPN), and 774-814 (LCKF…ILAF).

Belongs to the TRIM/RBCC family.

Its subcellular location is the cytoplasm. It is found in the P-body. It carries out the reaction S-ubiquitinyl-[E2 ubiquitin-conjugating enzyme]-L-cysteine + [acceptor protein]-L-lysine = [E2 ubiquitin-conjugating enzyme]-L-cysteine + N(6)-ubiquitinyl-[acceptor protein]-L-lysine.. It functions in the pathway protein modification; protein ubiquitination. In terms of biological role, E3 ubiquitin-protein ligase that cooperates with the microRNAs (miRNAs) machinery and promotes embryonic stem cells proliferation and maintenance. Binds to miRNAs and participates in post-transcriptional repression of transcripts. Required to maintain proliferation and prevent premature differentiation of neural progenitor cells during early neural development. The protein is E3 ubiquitin-protein ligase TRIM71 (trim71) of Xenopus tropicalis (Western clawed frog).